The following is a 170-amino-acid chain: MSNFKVRDPVIQERLDHDYAHHPLVARMNTLDQGNMSQAEYLVQKRHYLVFLIAHHYYEAYLRRMGGIQRRDHLQTLRDQKPRERADRVSAASAYDAGTFTVPSRPGPASGTTPGGQDSLGVSGSSITTLSSGPHSLSPASDILTTLSSTTETAAPAVADARKPPSGKKK.

Residues 76–88 (TLRDQKPRERADR) show a composition bias toward basic and acidic residues. The tract at residues 76–170 (TLRDQKPRER…ARKPPSGKKK (95 aa)) is disordered. Residues 110–139 (SGTTPGGQDSLGVSGSSITTLSSGPHSLSP) show a composition bias toward polar residues. A compositionally biased stretch (low complexity) spans 144 to 155 (LTTLSSTTETAA).

The protein belongs to the herpesviridae small capsomere-interacting protein family. As to quaternary structure, interacts with the major capsid protein/MCP.

The protein localises to the virion. The protein resides in the host nucleus. Participates in the assembly of the infectious particles by decorating the outer surface of the capsid shell and thus forming a layer between the capsid and the tegument. Complexes composed of the major capsid protein and small capsomere-interacting protein/SCP assemble together in the host cytoplasm and are translocated to the nucleus, where they accumulate and participate in capsid assembly. The polypeptide is Small capsomere-interacting protein (Homo sapiens (Human)).